A 180-amino-acid chain; its full sequence is Ribulose bisphosphate carboxylase small subunit, chloroplastic (180 aa).

Residues 1 to 56 constitute a chloroplast transit peptide; sequence MASSIMSSAAVATRSNGAQASMVAPFTGLKSNASFPVSRKTNLDITSIASNGGRVR.

Belongs to the RuBisCO small chain family. As to quaternary structure, heterohexadecamer of 8 large and 8 small subunits.

The protein localises to the plastid. Its subcellular location is the chloroplast. RuBisCO catalyzes two reactions: the carboxylation of D-ribulose 1,5-bisphosphate, the primary event in carbon dioxide fixation, as well as the oxidative fragmentation of the pentose substrate. Both reactions occur simultaneously and in competition at the same active site. Although the small subunit is not catalytic it is essential for maximal activity. This Stellaria longipes (Longstalk starwort) protein is Ribulose bisphosphate carboxylase small subunit, chloroplastic.